Here is a 148-residue protein sequence, read N- to C-terminus: Large ribosomal subunit protein bL9 (148 aa).

Belongs to the bacterial ribosomal protein bL9 family.

Binds to the 23S rRNA. The polypeptide is Large ribosomal subunit protein bL9 (Ruminiclostridium cellulolyticum (strain ATCC 35319 / DSM 5812 / JCM 6584 / H10) (Clostridium cellulolyticum)).